A 152-amino-acid chain; its full sequence is SsrA-binding protein (152 aa).

It belongs to the SmpB family.

The protein resides in the cytoplasm. In terms of biological role, required for rescue of stalled ribosomes mediated by trans-translation. Binds to transfer-messenger RNA (tmRNA), required for stable association of tmRNA with ribosomes. tmRNA and SmpB together mimic tRNA shape, replacing the anticodon stem-loop with SmpB. tmRNA is encoded by the ssrA gene; the 2 termini fold to resemble tRNA(Ala) and it encodes a 'tag peptide', a short internal open reading frame. During trans-translation Ala-aminoacylated tmRNA acts like a tRNA, entering the A-site of stalled ribosomes, displacing the stalled mRNA. The ribosome then switches to translate the ORF on the tmRNA; the nascent peptide is terminated with the 'tag peptide' encoded by the tmRNA and targeted for degradation. The ribosome is freed to recommence translation, which seems to be the essential function of trans-translation. In Helicobacter acinonychis (strain Sheeba), this protein is SsrA-binding protein.